Here is a 380-residue protein sequence, read N- to C-terminus: MAPTIRKSHPLLKIINVSFIDLPTPTNISSWWNFGSLLPVCLIAQIATGLFLAMHYTADTSLAFSSVAHICRDVNNGWLLRNLHANGASFFFICIYFHIGRGLYYGSYLYKETWNIGVILLLLVMATAFVGYVLPWGQMSFWGATVITNLLSAAPYIGSDLVQWIWGGFSVDNATLTRFFTFDFILLFIIAATSLIHLLFLHQTGSSNPTGLNSNLDKVSFHPYFSFKDLLGFIILLGALAILSTFAPNLLGDPDNFTPATPLSTPPHIKPEWYLLFAYAILRSILNKLGGVLALLLSIMVLFLMPITHTSKLRSLMFRPTAKAFFWALIANTIILTWIGGQPVEDPFISIGQIASGLYFLIFVLIIPTLGLLENKLLKI.

4 helical membrane-spanning segments follow: residues 34-54 (FGSLLPVCLIAQIATGLFLAM), 78-99 (WLLRNLHANGASFFFICIYFHI), 114-134 (WNIGVILLLLVMATAFVGYVL), and 179-199 (FFTFDFILLFIIAATSLIHLL). The heme b site is built by His84 and His98. A heme b-binding site is contributed by His197. An a ubiquinone-binding site is contributed by His202. Transmembrane regions (helical) follow at residues 227–247 (FKDLLGFIILLGALAILSTFA), 289–309 (LGGVLALLLSIMVLFLMPITH), 321–341 (TAKAFFWALIANTIILTWIGG), and 348–368 (FISIGQIASGLYFLIFVLIIP).

It belongs to the cytochrome b family. As to quaternary structure, the cytochrome bc1 complex contains 3 respiratory subunits (MT-CYB, CYC1 and UQCRFS1), 2 core proteins (UQCRC1 and UQCRC2) and probably 6 low-molecular weight proteins. Heme b serves as cofactor.

It is found in the mitochondrion inner membrane. Component of the ubiquinol-cytochrome c reductase complex (complex III or cytochrome b-c1 complex) that is part of the mitochondrial respiratory chain. The b-c1 complex mediates electron transfer from ubiquinol to cytochrome c. Contributes to the generation of a proton gradient across the mitochondrial membrane that is then used for ATP synthesis. This chain is Cytochrome b (mt-cyb), found in Glandirana rugosa (Japanese wrinkled frog).